Here is a 369-residue protein sequence, read N- to C-terminus: Putative 2-aminoethylphosphonate import ATP-binding protein PhnT (369 aa).

One can recognise an ABC transporter domain in the interval I19–L250. ATP is bound at residue G51 to T58.

It belongs to the ABC transporter superfamily. 2-aminoethylphosphonate importer (TC 3.A.1.11.5) family.

It localises to the cell inner membrane. Probably part of the PhnSTUV complex (TC 3.A.1.11.5) involved in 2-aminoethylphosphonate import. Probably responsible for energy coupling to the transport system. This chain is Putative 2-aminoethylphosphonate import ATP-binding protein PhnT (phnT), found in Salmonella typhimurium (strain LT2 / SGSC1412 / ATCC 700720).